A 682-amino-acid polypeptide reads, in one-letter code: TPR repeat-containing thioredoxin TTL4 (682 aa).

2 disordered regions span residues 1–120 (MSHY…GTPL) and 132–157 (NNNN…TGNI). Residue Ser-8 is modified to Phosphoserine. The span at 16–39 (KFRDSLSFQRDDDVINKPDFRELD) shows a compositional bias: basic and acidic residues. The residue at position 42 (Ser-42) is a Phosphoserine. The segment covering 48-71 (GSSSAAATPAASGSSSSSSGSASG) has biased composition (low complexity). 7 TPR repeats span residues 211-244 (SEEV…SPEN), 246-278 (AYRS…DPSY), 280-312 (RAHQ…PDQA), 402-435 (AYVL…DHSN), 449-482 (VAKA…DAFN), 483-516 (SVLY…QPSY), and 518-550 (KALL…LPGD). One can recognise a Thioredoxin domain in the interval 587 to 674 (DKFKTATSLP…MVCPSHQLLE (88 aa)).

In terms of tissue distribution, widely expressed.

Its function is as follows. Involved in osmotic and salt stress tolerance. May play a role in the control of meristematic cell size during osmotic stress. This Arabidopsis thaliana (Mouse-ear cress) protein is TPR repeat-containing thioredoxin TTL4 (TTL4).